Consider the following 51-residue polypeptide: Protein HokD (51 aa).

The helical transmembrane segment at 5 to 25 (KAMLIALIVICLTVIVTALVT) threads the bilayer.

This sequence belongs to the Hok/Gef family.

The protein localises to the cell inner membrane. Its function is as follows. Toxic component of a type I toxin-antitoxin (TA) system. When overexpressed kills cells within minutes; causes collapse of the transmembrane potential and arrest of respiration. Its toxic effect is probably neutralized by an antisense antitoxin Sok RNA. This is Protein HokD (hokD) from Escherichia coli O157:H7.